The chain runs to 1029 residues: Putative guanine nucleotide-exchange factor SED4 (1029 aa).

Residues 1-344 (MVFDSEYDLG…AMGGSNLWKS (344 aa)) lie on the Cytoplasmic side of the membrane. WD repeat units follow at residues 257-296 (KDYK…VIKL) and 300-339 (VHKD…MGGS). The chain crosses the membrane as a helical; Signal-anchor for type II membrane protein span at residues 345–365 (LLRFLFNVMKLAVVVIWAHLF). The Lumenal segment spans residues 366-1029 (YKYDLHHKLY…TQHNVINDEL (664 aa)). Asn-579 is a glycosylation site (N-linked (GlcNAc...) asparagine). Residues 579–592 (NASTSISIEESTNS) are compositionally biased toward low complexity. 3 disordered regions span residues 579 to 673 (NAST…NSIV), 710 to 732 (VVDE…VGSI), and 747 to 821 (EAVK…SQIS). The span at 593–603 (HSTFIESSSSL) shows a compositional bias: polar residues. N-linked (GlcNAc...) asparagine glycosylation occurs at Asn-608. The span at 613–628 (SSREISSETSIIKEDM) shows a compositional bias: basic and acidic residues. Polar residues predominate over residues 633-642 (ENVSEQSATD). N-linked (GlcNAc...) asparagine glycosylation is found at Asn-634 and Asn-647. Basic and acidic residues predominate over residues 643 to 654 (KVNKNQSIDKID). Over residues 655 to 672 (VSSSSSIPTSSEGSSNSI) the composition is skewed to low complexity. Basic and acidic residues predominate over residues 712 to 722 (DENHSESKLPT). 10 N-linked (GlcNAc...) asparagine glycosylation sites follow: Asn-714, Asn-754, Asn-774, Asn-792, Asn-806, Asn-855, Asn-865, Asn-874, Asn-884, and Asn-966. Composition is skewed to polar residues over residues 750–762 (KTSS…SQVT) and 771–782 (RVSNQSLSTVST). Over residues 783–799 (EHTEMKESSNLTEKKPE) the composition is skewed to basic and acidic residues. Residues 800 to 812 (SNSPESNLSESSL) are compositionally biased toward low complexity. The segment covering 858-867 (LVDSQSSNSS) has biased composition (low complexity). Disordered regions lie at residues 858–886 (LVDS…QNET), 963–982 (TPEN…FMTE), and 1003–1029 (VAQQ…NDEL). Polar residues predominate over residues 868 to 886 (VKTVETNVSQDEQTSQNET). Residues 1026–1029 (NDEL) carry the Prevents secretion from ER motif.

Belongs to the WD repeat SEC12 family.

Its subcellular location is the endoplasmic reticulum membrane. The protein resides in the golgi apparatus membrane. Functionally, putative guanine nucleotide-exchange factor (GEF) involved in the formation or budding of transport vesicles from the ER. Positive regulator of SAR1 probably through inhibition of the GTPase activation by SEC23. This is Putative guanine nucleotide-exchange factor SED4 (SED4) from Candida glabrata (strain ATCC 2001 / BCRC 20586 / JCM 3761 / NBRC 0622 / NRRL Y-65 / CBS 138) (Yeast).